Consider the following 211-residue polypeptide: Dof zinc finger protein 5 (211 aa).

The interval 37-101 (FVVAREKVEP…QRRLQDSAEA (65 aa)) is disordered. Positions 68–80 (IKREAADRDEEQR) are enriched in basic and acidic residues. Residues 109–163 (LPCPRCRSRDTKFCYFNNYNVNQPRHFCKACHRYWTAGGALRNVPVGAGRRKNRP) form a Dof-type zinc finger. The Zn(2+) site is built by C111, C114, C136, and C139. The interval 191-211 (SPTSPSPVYTDRWPVTPDRPF) is disordered.

Its subcellular location is the nucleus. Transcription factor that may transactivate seed storage protein genes in developing seeds. The sequence is that of Dof zinc finger protein 5 from Oryza sativa subsp. japonica (Rice).